The sequence spans 804 residues: DNA mismatch repair protein MutS (804 aa).

G614 to S621 contacts ATP.

This sequence belongs to the DNA mismatch repair MutS family.

This protein is involved in the repair of mismatches in DNA. It is possible that it carries out the mismatch recognition step. This protein has a weak ATPase activity. This is DNA mismatch repair protein MutS from Ehrlichia ruminantium (strain Welgevonden).